The sequence spans 491 residues: Serine/threonine-protein kinase 3 (491 aa).

An N-acetylmethionine modification is found at methionine 1. A Phosphoserine; by PLK1 modification is found at serine 15. A Protein kinase domain is found at 27–278 (FDVLEKLGEG…ATQLLQHPFI (252 aa)). ATP contacts are provided by residues 33–41 (LGEGSYGSV) and lysine 56. Phosphothreonine; by PKB/AKT1 is present on threonine 117. The Proton acceptor role is filled by aspartate 146. 2 residues coordinate Mg(2+): asparagine 151 and aspartate 164. A phosphothreonine; by autocatalysis mark is found at threonine 174 and threonine 180. Residues 287–328 (LRDLITEAMEIKAKRHEEQQRELEEEEENSDEDELDSHTMVK) are a coiled coil. The segment at 301–327 (RHEEQQRELEEEEENSDEDELDSHTMV) is disordered. Acidic residues predominate over residues 309 to 321 (LEEEEENSDEDEL). Serine 316 carries the post-translational modification Phosphoserine. Phosphothreonine; by autocatalysis is present on residues threonine 336 and threonine 378. Residues 370–392 (EDEEEEDGTMKRNATSPQVQRPS) form a disordered region. Residues 381–390 (RNATSPQVQR) are compositionally biased toward polar residues. Threonine 384 bears the Phosphothreonine; by PKB/AKT1 mark. A phosphoserine mark is found at serine 385 and serine 444. The SARAH domain maps to 437–484 (FDFLKNLSLEELQMRLKALDPMMEREIEELRQRYTAKRQPILDAMDAK). The stretch at 442-475 (NLSLEELQMRLKALDPMMEREIEELRQRYTAKRQ) forms a coiled coil.

Belongs to the protein kinase superfamily. STE Ser/Thr protein kinase family. STE20 subfamily. Homodimer; mediated via the coiled-coil region. Interacts with NORE1, which inhibits autoactivation. Interacts with and stabilizes SAV1. Interacts with RAF1, which prevents dimerization and phosphorylation. Interacts with RASSF1. Interacts (via SARAH domain) with isoform 1 of NEK2. Interacts with ESR1 only in the presence of SAV1. Interacts with PKB/AKT1. Forms a tripartite complex with MOBKL1B and STK38. Interacts with RASSF2 (via SARAH domain). Interacts with DLG5 (via PDZ domain 3). Interacts with LATS1; this interaction is inhibited in the presence of DLG5. Interacts with MARK3 in the presence of DLG5. Interacts with RASSF5; this interaction inhibits STK3 autoactivation through heterodimerization. Interacts (when phosphorylated) with SLMAP (via FHA domain); the interaction associates STK3 with the STRIPAK complex. Mg(2+) is required as a cofactor. Post-translationally, autophosphorylated on two residues Thr-174 and Thr-180, leading to activation. Phosphorylation at Thr-117 and Thr-384 by PKB/AKT1, leads to inhibition of its: cleavage, kinase activity, autophosphorylation at Thr-180, binding to RASSF1 and nuclear translocation, and increase in its binding to RAF1. Phosphorylated at Ser-15 by PLK1, leading to activation. When autophosphorylated at Thr-180, recruits STRIPAK complex and promotes PP2A-mediated dephosphorylation and inactivation of STK3. Proteolytically cleaved by caspase-3 during apoptosis. Proteolytic cleavage results in kinase activation and nuclear translocation of the truncated form (MST1/N). In terms of processing, ubiquitinated by TRIM69; leading to its redistribution to the perinuclear cytoskeleton, where it is phosphorylated by PLK1 and subsequently activated. As to expression, expressed at high levels in adult kidney, skeletal and placenta tissues and at very low levels in adult heart, lung and brain tissues.

Its subcellular location is the cytoplasm. It localises to the nucleus. The protein localises to the cytoskeleton. The protein resides in the microtubule organizing center. It is found in the centrosome. The enzyme catalyses L-seryl-[protein] + ATP = O-phospho-L-seryl-[protein] + ADP + H(+). It carries out the reaction L-threonyl-[protein] + ATP = O-phospho-L-threonyl-[protein] + ADP + H(+). Its activity is regulated as follows. Inhibited by the C-terminal non-catalytic region. Activated by caspase-cleavage. Full activation also requires homodimerization and autophosphorylation of Thr-180, which are inhibited by the proto-oncogene product RAF1. Activated by RASSF1 which acts by preventing its dephosphorylation. When autophosphorylated at Thr-180, recruits STRIPAK complex and promotes PP2A-mediated dephosphorylation and inactivation of STK3. Functionally, stress-activated, pro-apoptotic kinase which, following caspase-cleavage, enters the nucleus and induces chromatin condensation followed by internucleosomal DNA fragmentation. Key component of the Hippo signaling pathway which plays a pivotal role in organ size control and tumor suppression by restricting proliferation and promoting apoptosis. The core of this pathway is composed of a kinase cascade wherein STK3/MST2 and STK4/MST1, in complex with its regulatory protein SAV1, phosphorylates and activates LATS1/2 in complex with its regulatory protein MOB1, which in turn phosphorylates and inactivates YAP1 oncoprotein and WWTR1/TAZ. Phosphorylation of YAP1 by LATS2 inhibits its translocation into the nucleus to regulate cellular genes important for cell proliferation, cell death, and cell migration. STK3/MST2 and STK4/MST1 are required to repress proliferation of mature hepatocytes, to prevent activation of facultative adult liver stem cells (oval cells), and to inhibit tumor formation. Phosphorylates NKX2-1. Phosphorylates NEK2 and plays a role in centrosome disjunction by regulating the localization of NEK2 to centrosome, and its ability to phosphorylate CROCC and CEP250. In conjunction with SAV1, activates the transcriptional activity of ESR1 through the modulation of its phosphorylation. Positively regulates RAF1 activation via suppression of the inhibitory phosphorylation of RAF1 on 'Ser-259'. Phosphorylates MOBKL1A and RASSF2. Phosphorylates MOBKL1B on 'Thr-74'. Acts cooperatively with MOBKL1B to activate STK38. The chain is Serine/threonine-protein kinase 3 from Homo sapiens (Human).